Consider the following 593-residue polypeptide: UvrABC system protein C (593 aa).

One can recognise a GIY-YIG domain in the interval Met17–Ile94. The region spanning Lys199–Leu234 is the UVR domain.

It belongs to the UvrC family. In terms of assembly, interacts with UvrB in an incision complex.

The protein localises to the cytoplasm. The UvrABC repair system catalyzes the recognition and processing of DNA lesions. UvrC both incises the 5' and 3' sides of the lesion. The N-terminal half is responsible for the 3' incision and the C-terminal half is responsible for the 5' incision. This is UvrABC system protein C from Staphylococcus aureus (strain Mu3 / ATCC 700698).